The sequence spans 24 residues: Small ribosomal subunit protein uS19c (24 aa).

Belongs to the universal ribosomal protein uS19 family.

It localises to the plastid. The protein localises to the chloroplast. Its function is as follows. Protein S19 forms a complex with S13 that binds strongly to the 16S ribosomal RNA. This Petunia hybrida (Petunia) protein is Small ribosomal subunit protein uS19c (rps19).